The primary structure comprises 405 residues: Palmitoyltransferase PFA5 (405 aa).

Helical transmembrane passes span Tyr-12 to Ile-32, Ile-51 to Ile-71, Leu-154 to Cys-174, Phe-191 to Ile-211, and Phe-310 to Ile-330. A DHHC domain is found at Tyr-111–Met-161.

Belongs to the DHHC palmitoyltransferase family. PFA5 subfamily. Post-translationally, autopalmitoylated.

Its subcellular location is the membrane. The catalysed reaction is L-cysteinyl-[protein] + hexadecanoyl-CoA = S-hexadecanoyl-L-cysteinyl-[protein] + CoA. This Candida albicans (strain SC5314 / ATCC MYA-2876) (Yeast) protein is Palmitoyltransferase PFA5 (PFA5).